The following is a 429-amino-acid chain: Type II methyltransferase M.AgeI (429 aa).

Residues 1-429 (MKTIDLFCGA…MAETIKVAIS (429 aa)) enclose the SAM-dependent MTase C5-type domain. Cysteine 80 is a catalytic residue.

It belongs to the class I-like SAM-binding methyltransferase superfamily. C5-methyltransferase family.

The enzyme catalyses a 2'-deoxycytidine in DNA + S-adenosyl-L-methionine = a 5-methyl-2'-deoxycytidine in DNA + S-adenosyl-L-homocysteine + H(+). A methylase, recognizes the double-stranded sequence 5'-ACCGGT-3', methylates C-3 on both strands, and protects the DNA from cleavage by the AgeI endonuclease. The sequence is that of Type II methyltransferase M.AgeI (ageIM) from Thalassovita gelatinovora (Thalassobius gelatinovorus).